The primary structure comprises 624 residues: Chromosomal replication initiator protein DnaA (624 aa).

The tract at residues 1–99 (MADVPADLAA…SAGEPPSPPA (99 aa)) is domain I, interacts with DnaA modulators. Residues 88–284 (DDSAGEPPSP…APGPGEPHAR (197 aa)) form a disordered region. A domain II region spans residues 100–283 (PPMHQSHQSQ…PAPGPGEPHA (184 aa)). Over residues 102–112 (MHQSHQSQQGH) the composition is skewed to low complexity. Composition is skewed to basic and acidic residues over residues 118–141 (QRDDAPRGDAYDGYGHRPSDDGMP) and 176–206 (GYQDREQPSGEPYRESESYRERENEQYREQA). The span at 250-264 (PRQGGHGPGRTGGSV) shows a compositional bias: gly residues. The tract at residues 284–500 (RLNPKYLFDT…GALIRVTAFA (217 aa)) is domain III, AAA+ region. ATP is bound by residues Gly328, Gly330, Lys331, and Thr332. The segment at 501 to 624 (SLNRQPVDLG…TELTNRIKNG (124 aa)) is domain IV, binds dsDNA.

Belongs to the DnaA family. Oligomerizes as a right-handed, spiral filament on DNA at oriC.

The protein resides in the cytoplasm. Functionally, plays an essential role in the initiation and regulation of chromosomal replication. ATP-DnaA binds to the origin of replication (oriC) to initiate formation of the DNA replication initiation complex once per cell cycle. Binds the DnaA box (a 9 base pair repeat at the origin) and separates the double-stranded (ds)DNA. Forms a right-handed helical filament on oriC DNA; dsDNA binds to the exterior of the filament while single-stranded (ss)DNA is stabiized in the filament's interior. The ATP-DnaA-oriC complex binds and stabilizes one strand of the AT-rich DNA unwinding element (DUE), permitting loading of DNA polymerase. After initiation quickly degrades to an ADP-DnaA complex that is not apt for DNA replication. Binds acidic phospholipids. In terms of biological role, the DnaA box consensus is 5'-(T/C)(T/C)(G/AC)TCCACA-3'. The sequence is that of Chromosomal replication initiator protein DnaA from Streptomyces anulatus (Streptomyces chrysomallus).